The primary structure comprises 453 residues: uncharacterized protein (453 aa).

This is an uncharacterized protein from Caenorhabditis elegans.